We begin with the raw amino-acid sequence, 166 residues long: Disulfide bond reductase DsbH (166 aa).

The first 22 residues, 1-22 (MKFWLQGCAFVGCLLLTLPCCA), serve as a signal peptide directing secretion. The Thioredoxin domain occupies 32–166 (LQQTRPIAAA…SKVKSALKLR (135 aa)). A disulfide bridge links Cys72 with Cys75. Residue 73 to 74 (MW) participates in substrate binding.

In terms of assembly, monomer.

The protein resides in the periplasm. In terms of biological role, catalyzes the reduction of disulfide bonds. May function in reducing intermolecular disulfides between proteins and small molecules in the periplasm, or keeping a specific subset of periplasmic proteins reduced, or maintaining the periplasm of Chlamydia in a generally reducing state. Seems to be unable to oxidize thiols into disulfides and does not display disulfide bond isomerase activity. This Chlamydia pneumoniae (Chlamydophila pneumoniae) protein is Disulfide bond reductase DsbH (dsbH).